We begin with the raw amino-acid sequence, 97 residues long: Small ribosomal subunit protein bS6 (97 aa).

It belongs to the bacterial ribosomal protein bS6 family.

In terms of biological role, binds together with bS18 to 16S ribosomal RNA. The polypeptide is Small ribosomal subunit protein bS6 (rpsF) (Lactococcus lactis subsp. lactis (strain IL1403) (Streptococcus lactis)).